We begin with the raw amino-acid sequence, 118 residues long: Small ribosomal subunit protein uS13 (118 aa).

Residues 93–118 form a disordered region; that stretch reads KGLPVRGQRTKTNARTRKGPRKPIRK.

The protein belongs to the universal ribosomal protein uS13 family. As to quaternary structure, part of the 30S ribosomal subunit. Forms a loose heterodimer with protein S19. Forms two bridges to the 50S subunit in the 70S ribosome.

Located at the top of the head of the 30S subunit, it contacts several helices of the 16S rRNA. In the 70S ribosome it contacts the 23S rRNA (bridge B1a) and protein L5 of the 50S subunit (bridge B1b), connecting the 2 subunits; these bridges are implicated in subunit movement. Contacts the tRNAs in the A and P-sites. In Ectopseudomonas mendocina (strain ymp) (Pseudomonas mendocina), this protein is Small ribosomal subunit protein uS13.